Here is a 182-residue protein sequence, read N- to C-terminus: Large ribosomal subunit protein uL5 (182 aa).

Belongs to the universal ribosomal protein uL5 family. Part of the 50S ribosomal subunit; part of the 5S rRNA/L5/L18/L25 subcomplex. Contacts the 5S rRNA and the P site tRNA. Forms a bridge to the 30S subunit in the 70S ribosome.

In terms of biological role, this is one of the proteins that bind and probably mediate the attachment of the 5S RNA into the large ribosomal subunit, where it forms part of the central protuberance. In the 70S ribosome it contacts protein S13 of the 30S subunit (bridge B1b), connecting the 2 subunits; this bridge is implicated in subunit movement. Contacts the P site tRNA; the 5S rRNA and some of its associated proteins might help stabilize positioning of ribosome-bound tRNAs. This is Large ribosomal subunit protein uL5 from Nostoc punctiforme (strain ATCC 29133 / PCC 73102).